The primary structure comprises 227 residues: UPF0173 metal-dependent hydrolase STK_14180 (227 aa).

Belongs to the UPF0173 family.

The sequence is that of UPF0173 metal-dependent hydrolase STK_14180 from Sulfurisphaera tokodaii (strain DSM 16993 / JCM 10545 / NBRC 100140 / 7) (Sulfolobus tokodaii).